Reading from the N-terminus, the 174-residue chain is Endoribonuclease YbeY (174 aa).

H133, H137, and H143 together coordinate Zn(2+).

It belongs to the endoribonuclease YbeY family. The cofactor is Zn(2+).

It is found in the cytoplasm. Functionally, single strand-specific metallo-endoribonuclease involved in late-stage 70S ribosome quality control and in maturation of the 3' terminus of the 16S rRNA. The protein is Endoribonuclease YbeY of Paracoccus denitrificans (strain Pd 1222).